We begin with the raw amino-acid sequence, 476 residues long: Arginine biosynthesis bifunctional protein ArgJ, mitochondrial (476 aa).

Positions 193, 219, 237, 337, 471, and 476 each coordinate substrate. Threonine 237 (nucleophile) is an active-site residue.

Belongs to the ArgJ family. Heterodimer of an alpha and a beta chain. Post-translationally, the alpha and beta chains are autoproteolytically processed from a single precursor protein within the mitochondrion.

It is found in the mitochondrion matrix. It carries out the reaction N(2)-acetyl-L-ornithine + L-glutamate = N-acetyl-L-glutamate + L-ornithine. It catalyses the reaction L-glutamate + acetyl-CoA = N-acetyl-L-glutamate + CoA + H(+). It participates in amino-acid biosynthesis; L-arginine biosynthesis; L-ornithine and N-acetyl-L-glutamate from L-glutamate and N(2)-acetyl-L-ornithine (cyclic): step 1/1. The protein operates within amino-acid biosynthesis; L-arginine biosynthesis; N(2)-acetyl-L-ornithine from L-glutamate: step 1/4. Functionally, catalyzes two activities which are involved in the cyclic version of arginine biosynthesis: the synthesis of acetylglutamate from glutamate and acetyl-CoA, and of ornithine by transacetylation between acetylornithine and glutamate. This Cryptococcus neoformans var. neoformans serotype D (strain JEC21 / ATCC MYA-565) (Filobasidiella neoformans) protein is Arginine biosynthesis bifunctional protein ArgJ, mitochondrial.